We begin with the raw amino-acid sequence, 35 residues long: Photosystem II reaction center protein T (35 aa).

A helical membrane pass occupies residues 3-23 (ALVYTFLLVSTLGIIFFAIFF).

It belongs to the PsbT family. PSII is composed of 1 copy each of membrane proteins PsbA, PsbB, PsbC, PsbD, PsbE, PsbF, PsbH, PsbI, PsbJ, PsbK, PsbL, PsbM, PsbT, PsbY, PsbZ, Psb30/Ycf12, at least 3 peripheral proteins of the oxygen-evolving complex and a large number of cofactors. It forms dimeric complexes.

It localises to the plastid. It is found in the chloroplast thylakoid membrane. Found at the monomer-monomer interface of the photosystem II (PS II) dimer, plays a role in assembly and dimerization of PSII. PSII is a light-driven water plastoquinone oxidoreductase, using light energy to abstract electrons from H(2)O, generating a proton gradient subsequently used for ATP formation. In Gunnera chilensis (Chilean rhubarb), this protein is Photosystem II reaction center protein T.